We begin with the raw amino-acid sequence, 821 residues long: Dapper homolog 1 (821 aa).

Residues 88 to 136 (LNTEEKLLEENILLLRKQLNCLRRRDAGLINQLQELDRQISDLRLDTET) adopt a coiled-coil conformation. 4 disordered regions span residues 288 to 312 (SKPG…SSWH), 386 to 432 (QDAS…STTN), 564 to 615 (NSAS…KTKR), and 627 to 655 (ERHT…VLAK). Residues 388 to 400 (ASATSTEPSTASP) are compositionally biased toward low complexity. A compositionally biased stretch (polar residues) spans 401–432 (QRQWSAESKGGTPQNGAYLSSSQPQNSYSTTN). 3 stretches are compositionally biased toward basic residues: residues 584–593 (DKHRTGSRRT), 601–615 (HLHK…KTKR), and 639–649 (AQRHHGHHRHH). Residues 818–821 (MTTV) carry the PDZ-binding motif.

It belongs to the dapper family. As to quaternary structure, interacts with dvl2.

The protein resides in the cytoplasm. Involved in regulation of intracellular signaling pathways during development. Specifically thought to play a role in canonical and/or non-canonical Wnt signaling pathways through interaction with DSH (Dishevelled) family proteins. Binds to dvl2 and may regulate the degradation of ctnnb1/beta-catenin, thereby modulating the transcriptional activation of target genes of the Wnt signaling pathway. Seems to activate the canonical Wnt signaling pathway. In Danio rerio (Zebrafish), this protein is Dapper homolog 1 (dact1).